Reading from the N-terminus, the 740-residue chain is Ribulose bisphosphate carboxylase, chloroplastic (740 aa).

A chloroplast-targeting transit peptide spans 1–55; that stretch reads MPSSSFTTGLALGAGALVGANAFVAPTAKTTNLRAPTQEASLQVAASQQTEQPAP. Residues 56-76 form a helical membrane-spanning segment; that stretch reads STSALPWAFGAGACLALAAGG. N213 is a substrate binding site. K268 serves as the catalytic Proton acceptor. K270 contributes to the substrate binding site. Mg(2+) contacts are provided by K293, D295, and E296. The residue at position 293 (K293) is an N6-carboxylysine. H389 (proton acceptor) is an active-site residue. Substrate is bound by residues R390, H423, and S470.

The protein belongs to the RuBisCO large chain family. Type II subfamily. Homodimer. Mg(2+) serves as cofactor.

The protein resides in the plastid. It is found in the chloroplast membrane. It carries out the reaction 2 (2R)-3-phosphoglycerate + 2 H(+) = D-ribulose 1,5-bisphosphate + CO2 + H2O. The catalysed reaction is D-ribulose 1,5-bisphosphate + O2 = 2-phosphoglycolate + (2R)-3-phosphoglycerate + 2 H(+). Its function is as follows. RuBisCO catalyzes two reactions: the carboxylation of D-ribulose 1,5-bisphosphate, the primary event in carbon dioxide fixation, as well as the oxidative fragmentation of the pentose substrate. Both reactions occur simultaneously and in competition at the same active site. In Heterocapsa triquetra (Dinoflagellate), this protein is Ribulose bisphosphate carboxylase, chloroplastic (rbcL).